Here is a 166-residue protein sequence, read N- to C-terminus: Large ribosomal subunit protein uL10 (166 aa).

The protein belongs to the universal ribosomal protein uL10 family. Part of the ribosomal stalk of the 50S ribosomal subunit. The N-terminus interacts with L11 and the large rRNA to form the base of the stalk. The C-terminus forms an elongated spine to which L12 dimers bind in a sequential fashion forming a multimeric L10(L12)X complex.

Its function is as follows. Forms part of the ribosomal stalk, playing a central role in the interaction of the ribosome with GTP-bound translation factors. The polypeptide is Large ribosomal subunit protein uL10 (Streptococcus sanguinis (strain SK36)).